A 637-amino-acid polypeptide reads, in one-letter code: Clathrin coat assembly protein AP180A (637 aa).

The ENTH domain maps to 1 to 126 (MTTYFKLVKG…REFGKIKKDY (126 aa)). Positions 555-637 (TQNHLQQQQQ…YANNLNLIDM (83 aa)) are disordered. 2 stretches are compositionally biased toward low complexity: residues 560–579 (QQQQ…QPQQ) and 600–622 (QPQN…TQQP). Residues 587–637 (AGANPVTNITGTVQPQNFPFYPQQQPQPEQSQTQQPVLGNQYANNLNLIDM) are clathrin-binding. Residues 623–637 (VLGNQYANNLNLIDM) are compositionally biased toward polar residues.

Belongs to the AP180 family. Interacts with PAN1 and the clathrin heavy and light chains CHC1 and CLC1.

It localises to the bud. Its subcellular location is the bud neck. It is found in the cell membrane. The protein resides in the cytoplasm. Involved in endocytosis and clathrin cage assembly. The polypeptide is Clathrin coat assembly protein AP180A (YAP1801) (Saccharomyces cerevisiae (strain ATCC 204508 / S288c) (Baker's yeast)).